The chain runs to 299 residues: Large ribosomal subunit protein uL18 (299 aa).

The protein belongs to the universal ribosomal protein uL18 family. As to quaternary structure, component of the large ribosomal subunit (LSU).

The protein localises to the cytoplasm. Its subcellular location is the nucleus. Functionally, component of the ribosome, a large ribonucleoprotein complex responsible for the synthesis of proteins in the cell. The small ribosomal subunit (SSU) binds messenger RNAs (mRNAs) and translates the encoded message by selecting cognate aminoacyl-transfer RNA (tRNA) molecules. The large subunit (LSU) contains the ribosomal catalytic site termed the peptidyl transferase center (PTC), which catalyzes the formation of peptide bonds, thereby polymerizing the amino acids delivered by tRNAs into a polypeptide chain. The nascent polypeptides leave the ribosome through a tunnel in the LSU and interact with protein factors that function in enzymatic processing, targeting, and the membrane insertion of nascent chains at the exit of the ribosomal tunnel. This is Large ribosomal subunit protein uL18 (RpL5) from Bombyx mori (Silk moth).